The sequence spans 351 residues: Cyanide hydratase (351 aa).

The CN hydrolase domain occupies 6-285; sequence YKAAAVTSEP…DGLLFVDIDL (280 aa). Glu46 acts as the Proton acceptor in catalysis. The active site involves Lys128. Catalysis depends on Cys163, which acts as the Nucleophile.

It belongs to the carbon-nitrogen hydrolase superfamily. Nitrilase family. Oligomer of dimers, forming left-handed helical fibers with a diameter of 13 nm but with lengths ranging from approximately 1 um at the leading edge of the peak to having approximately the same length and diameter at the trailing edge.

The enzyme catalyses formamide = hydrogen cyanide + H2O. Functionally, catalyzes the hydration of cyanide to formamide. Degradation of cyanide may be important for plant pathogenic fungi in infection of cyanogenic plants. The polypeptide is Cyanide hydratase (Neurospora crassa (strain ATCC 24698 / 74-OR23-1A / CBS 708.71 / DSM 1257 / FGSC 987)).